Reading from the N-terminus, the 878-residue chain is NUT family member 2B (878 aa).

6 disordered regions span residues 273 to 324, 417 to 512, 527 to 560, 624 to 693, 709 to 757, and 775 to 878; these read WSQG…DDSC, QKSQ…PEEI, LLGP…PPDP, PPLK…GMAR, LRAA…EEEE, and WLPQ…HCSQ. Pro residues-rich tracts occupy residues 278–288 and 427–444; these read PLPPPPPPAAQ and CLPP…PPAP. The span at 476–487 shows a compositional bias: basic residues; it reads TKARRPPPRPHR. The span at 537–551 shows a compositional bias: basic and acidic residues; it reads EPEKQREEGKVKQPQ.

Belongs to the NUT family.

This Homo sapiens (Human) protein is NUT family member 2B (NUTM2B).